Reading from the N-terminus, the 99-residue chain is Probable small ribosomal subunit protein cS23 (99 aa).

This sequence belongs to the chloroplast-specific ribosomal protein cS23 family. As to quaternary structure, part of the 30S ribosomal subunit.

Functionally, probably a ribosomal protein or a ribosome-associated protein. This chain is Probable small ribosomal subunit protein cS23, found in Synechococcus sp. (strain JA-2-3B'a(2-13)) (Cyanobacteria bacterium Yellowstone B-Prime).